Consider the following 144-residue polypeptide: Succinate dehydrogenase cytochrome b560 subunit (144 aa).

The next 3 membrane-spanning stretches (helical) occupy residues 40–60 (IFHRITGGVLALTLCFFILIL), 84–104 (GFLFIAISFFLLLFIFYHLFA), and 124–144 (LTGYIMLGLAFLFTLIAWIIF). Residue H101 coordinates heme.

The protein belongs to the cytochrome b560 family. In terms of assembly, forms part of complex II containing four subunits: a 70 kDa flavoprotein (FP), a 27 kDa iron-sulfur protein (IP), a cytochrome B and a membrane-anchoring protein. It depends on heme as a cofactor.

It is found in the mitochondrion inner membrane. The protein operates within carbohydrate metabolism; tricarboxylic acid cycle. Membrane-anchoring subunit of succinate dehydrogenase (SDH) that is involved in complex II of the mitochondrial electron transport chain and is responsible for transferring electrons from succinate to ubiquinone (coenzyme Q). The sequence is that of Succinate dehydrogenase cytochrome b560 subunit (SDH3) from Reclinomonas americana.